Consider the following 299-residue polypeptide: ATP phosphoribosyltransferase (299 aa).

Belongs to the ATP phosphoribosyltransferase family. Long subfamily. The cofactor is Mg(2+).

The protein localises to the cytoplasm. It catalyses the reaction 1-(5-phospho-beta-D-ribosyl)-ATP + diphosphate = 5-phospho-alpha-D-ribose 1-diphosphate + ATP. Its pathway is amino-acid biosynthesis; L-histidine biosynthesis; L-histidine from 5-phospho-alpha-D-ribose 1-diphosphate: step 1/9. With respect to regulation, feedback inhibited by histidine. Its function is as follows. Catalyzes the condensation of ATP and 5-phosphoribose 1-diphosphate to form N'-(5'-phosphoribosyl)-ATP (PR-ATP). Has a crucial role in the pathway because the rate of histidine biosynthesis seems to be controlled primarily by regulation of HisG enzymatic activity. In Pasteurella multocida (strain Pm70), this protein is ATP phosphoribosyltransferase (hisG).